Reading from the N-terminus, the 373-residue chain is Chaperone protein DnaJ (373 aa).

The J domain occupies 4 to 69 (DYYETLSVER…SKRRIYDTYG (66 aa)). The CR-type zinc finger occupies 131–209 (GVSKEVKLSR…CHGEGLVKKT (79 aa)). Residues Cys-144, Cys-147, Cys-161, Cys-164, Cys-183, Cys-186, Cys-197, and Cys-200 each coordinate Zn(2+). 4 CXXCXGXG motif repeats span residues 144 to 151 (CWTCEGTG), 161 to 168 (CPTCNGRG), 183 to 190 (CPECEGEG), and 197 to 204 (CNDCHGEG).

Belongs to the DnaJ family. In terms of assembly, homodimer. Requires Zn(2+) as cofactor.

It is found in the cytoplasm. In terms of biological role, participates actively in the response to hyperosmotic and heat shock by preventing the aggregation of stress-denatured proteins and by disaggregating proteins, also in an autonomous, DnaK-independent fashion. Unfolded proteins bind initially to DnaJ; upon interaction with the DnaJ-bound protein, DnaK hydrolyzes its bound ATP, resulting in the formation of a stable complex. GrpE releases ADP from DnaK; ATP binding to DnaK triggers the release of the substrate protein, thus completing the reaction cycle. Several rounds of ATP-dependent interactions between DnaJ, DnaK and GrpE are required for fully efficient folding. Also involved, together with DnaK and GrpE, in the DNA replication of plasmids through activation of initiation proteins. This is Chaperone protein DnaJ from Desulfotalea psychrophila (strain LSv54 / DSM 12343).